The chain runs to 41 residues: uncharacterized protein (41 aa).

Positions 1–12 (MTRNVVRQEFEA) are enriched in basic and acidic residues. The segment at 1–23 (MTRNVVRQEFEAPGKPQDSSQQD) is disordered.

This is an uncharacterized protein from Homo sapiens (Human).